The following is a 295-amino-acid chain: Pantothenate synthetase (295 aa).

An ATP-binding site is contributed by 30–37; sequence MGNLHDGH. The active-site Proton donor is histidine 37. Glutamine 61 provides a ligand contact to (R)-pantoate. A beta-alanine-binding site is contributed by glutamine 61. An ATP-binding site is contributed by 149–152; the sequence is GEKD. Glutamine 155 lines the (R)-pantoate pocket. ATP-binding positions include valine 178 and 186 to 189; that span reads MSSR.

It belongs to the pantothenate synthetase family. As to quaternary structure, homodimer.

Its subcellular location is the cytoplasm. It catalyses the reaction (R)-pantoate + beta-alanine + ATP = (R)-pantothenate + AMP + diphosphate + H(+). Its pathway is cofactor biosynthesis; (R)-pantothenate biosynthesis; (R)-pantothenate from (R)-pantoate and beta-alanine: step 1/1. Its function is as follows. Catalyzes the condensation of pantoate with beta-alanine in an ATP-dependent reaction via a pantoyl-adenylate intermediate. This is Pantothenate synthetase from Photobacterium profundum (strain SS9).